Consider the following 94-residue polypeptide: Putative pterin-4-alpha-carbinolamine dehydratase (94 aa).

The protein belongs to the pterin-4-alpha-carbinolamine dehydratase family.

It catalyses the reaction (4aS,6R)-4a-hydroxy-L-erythro-5,6,7,8-tetrahydrobiopterin = (6R)-L-erythro-6,7-dihydrobiopterin + H2O. The chain is Putative pterin-4-alpha-carbinolamine dehydratase from Mycobacteroides abscessus (strain ATCC 19977 / DSM 44196 / CCUG 20993 / CIP 104536 / JCM 13569 / NCTC 13031 / TMC 1543 / L948) (Mycobacterium abscessus).